The following is a 232-amino-acid chain: Ribose-5-phosphate isomerase A (232 aa).

Residues 28-31 (TGST), 83-86 (DGAD), and 96-99 (KGGG) contribute to the substrate site. The active-site Proton acceptor is the Glu-105. Lys-123 is a binding site for substrate.

The protein belongs to the ribose 5-phosphate isomerase family. Homodimer.

The enzyme catalyses aldehydo-D-ribose 5-phosphate = D-ribulose 5-phosphate. It functions in the pathway carbohydrate degradation; pentose phosphate pathway; D-ribose 5-phosphate from D-ribulose 5-phosphate (non-oxidative stage): step 1/1. Functionally, catalyzes the reversible conversion of ribose-5-phosphate to ribulose 5-phosphate. This Rhizobium leguminosarum bv. trifolii (strain WSM2304) protein is Ribose-5-phosphate isomerase A.